Consider the following 115-residue polypeptide: NAD(P)H-quinone oxidoreductase subunit M (115 aa).

It belongs to the complex I NdhM subunit family. In terms of assembly, NDH-1 can be composed of about 15 different subunits; different subcomplexes with different compositions have been identified which probably have different functions.

Its subcellular location is the cellular thylakoid membrane. It catalyses the reaction a plastoquinone + NADH + (n+1) H(+)(in) = a plastoquinol + NAD(+) + n H(+)(out). The catalysed reaction is a plastoquinone + NADPH + (n+1) H(+)(in) = a plastoquinol + NADP(+) + n H(+)(out). Functionally, NDH-1 shuttles electrons from an unknown electron donor, via FMN and iron-sulfur (Fe-S) centers, to quinones in the respiratory and/or the photosynthetic chain. The immediate electron acceptor for the enzyme in this species is believed to be plastoquinone. Couples the redox reaction to proton translocation, and thus conserves the redox energy in a proton gradient. Cyanobacterial NDH-1 also plays a role in inorganic carbon-concentration. This Prochlorococcus marinus (strain MIT 9301) protein is NAD(P)H-quinone oxidoreductase subunit M.